The following is a 178-amino-acid chain: Large ribosomal subunit protein bL25 (178 aa).

Belongs to the bacterial ribosomal protein bL25 family. CTC subfamily. In terms of assembly, part of the 50S ribosomal subunit; part of the 5S rRNA/L5/L18/L25 subcomplex. Contacts the 5S rRNA. Binds to the 5S rRNA independently of L5 and L18.

This is one of the proteins that binds to the 5S RNA in the ribosome where it forms part of the central protuberance. The protein is Large ribosomal subunit protein bL25 of Campylobacter jejuni subsp. jejuni serotype O:6 (strain 81116 / NCTC 11828).